The sequence spans 580 residues: Formate--tetrahydrofolate ligase (580 aa).

83 to 90 serves as a coordination point for ATP; sequence TPMGEGKT.

The protein belongs to the formate--tetrahydrofolate ligase family.

The enzyme catalyses (6S)-5,6,7,8-tetrahydrofolate + formate + ATP = (6R)-10-formyltetrahydrofolate + ADP + phosphate. The protein operates within one-carbon metabolism; tetrahydrofolate interconversion. This chain is Formate--tetrahydrofolate ligase, found in Haloquadratum walsbyi (strain DSM 16790 / HBSQ001).